The sequence spans 267 residues: MAPRRARGCRTLGLPALLLLLLLRPPATRGITCPPPMSVEHADIWVKSYSLYSRERYICNSGFKRKAGTSSLTECVLNKATNVAHWTTPSLKCIRDPALVHQRPAPPSTVTTAGVTPQPESLSPSGKEPAASSPSSNNTAATTAAIVPGSQLMPSKSPSTGTTEISSHESSHGTPSQTTAKNWELTASASHQPPGVYPQGHSDTTVAISTSTVLLCGLSAVSLLACYLKSRQTPPLASVEMEAMEALPVTWGTSSRDEDLENCSHHL.

Positions 1–30 (MAPRRARGCRTLGLPALLLLLLLRPPATRG) are cleaved as a signal peptide. The Sushi domain maps to 31 to 95 (ITCPPPMSVE…WTTPSLKCIR (65 aa)). Residues 31–205 (ITCPPPMSVE…VYPQGHSDTT (175 aa)) lie on the Extracellular side of the membrane. 2 disulfides stabilise this stretch: C33–C75 and C59–C93. The segment at 102–178 (QRPAPPSTVT…ESSHGTPSQT (77 aa)) is disordered. The segment covering 108-124 (STVTTAGVTPQPESLSP) has biased composition (polar residues). Low complexity predominate over residues 129-145 (PAASSPSSNNTAATTAA). N137 carries N-linked (GlcNAc...) asparagine glycosylation. Positions 152 to 165 (LMPSKSPSTGTTEI) are enriched in polar residues. A helical membrane pass occupies residues 206-228 (VAISTSTVLLCGLSAVSLLACYL). The Cytoplasmic segment spans residues 229 to 267 (KSRQTPPLASVEMEAMEALPVTWGTSSRDEDLENCSHHL).

In terms of assembly, the interleukin-15 receptor IL15R is a heterotrimer of IL15RA, IL2RB and IL2RG. IL15RA also self-associates. Interacts with SYK. N-glycosylated and O-glycosylated. Post-translationally, a soluble form (sIL-15RA) arises from proteolytic shedding of the membrane-anchored receptor. It also binds IL-15 and thus interferes with IL-15 binding to the membrane receptor. Expressed in neutrophils (at protein level). Expressed in fetal brain with higher expression in the hippocampus and cerebellum than in cortex and thalamus. Higher levels of soluble sIL-15RA form in comparison with membrane-bound forms is present in all brain structures. Isoforms 1, 3, 4, 5, 6, 7, 8 and 9: Widely expressed.

Its subcellular location is the membrane. It localises to the nucleus membrane. It is found in the cell surface. The protein localises to the endoplasmic reticulum membrane. The protein resides in the golgi apparatus membrane. Its subcellular location is the cytoplasmic vesicle membrane. It localises to the secreted. It is found in the extracellular space. High-affinity receptor for interleukin-15. Can signal both in cis and trans where IL15R from one subset of cells presents IL15 to neighboring IL2RG-expressing cells. In neutrophils, binds and activates kinase SYK in response to IL15 stimulation. In neutrophils, required for IL15-induced phagocytosis in a SYK-dependent manner. Expression of different isoforms may alter or interfere with signal transduction. Functionally, does not bind IL15. The sequence is that of Interleukin-15 receptor subunit alpha (IL15RA) from Homo sapiens (Human).